A 169-amino-acid polypeptide reads, in one-letter code: Shikimate kinase (169 aa).

13 to 18 is a binding site for ATP; it reads GAGKST. Ser-17 lines the Mg(2+) pocket. 3 residues coordinate substrate: Asp-35, Arg-59, and Gly-80. Arg-117 contributes to the ATP binding site. Arg-136 contacts substrate. Residue Arg-153 participates in ATP binding.

This sequence belongs to the shikimate kinase family. Monomer. The cofactor is Mg(2+).

The protein localises to the cytoplasm. The catalysed reaction is shikimate + ATP = 3-phosphoshikimate + ADP + H(+). Its pathway is metabolic intermediate biosynthesis; chorismate biosynthesis; chorismate from D-erythrose 4-phosphate and phosphoenolpyruvate: step 5/7. Its function is as follows. Catalyzes the specific phosphorylation of the 3-hydroxyl group of shikimic acid using ATP as a cosubstrate. In Corynebacterium glutamicum (strain ATCC 13032 / DSM 20300 / JCM 1318 / BCRC 11384 / CCUG 27702 / LMG 3730 / NBRC 12168 / NCIMB 10025 / NRRL B-2784 / 534), this protein is Shikimate kinase.